The following is a 923-amino-acid chain: Periodic tryptophan protein 2 (923 aa).

WD repeat units follow at residues glycine 12–tyrosine 52, glutamate 53–phenylalanine 93, asparagine 94–glutamine 132, glycine 144–alanine 183, and glycine 189–aspartate 228. Serine 225 and serine 232 each carry phosphoserine. 8 WD repeats span residues alanine 258–glutamine 297, methionine 300–lysine 340, glycine 343–threonine 382, glutamate 385–threonine 424, threonine 428–serine 470, glycine 471–glutamate 510, glutamate 513–asparagine 552, and glutamate 575–arginine 614. Phosphoserine occurs at positions 651 and 664. The tract at residues leucine 653 to lysine 674 is disordered. One copy of the WD 14 repeat lies at arginine 676–proline 714. Composition is skewed to acidic residues over residues lysine 869–glycine 893 and aspartate 911–proline 923. The tract at residues lysine 869 to proline 923 is disordered. 2 positions are modified to phosphoserine: serine 912 and serine 913.

It belongs to the WD repeat PWP2 family. As to quaternary structure, interacts with snoRNA U3. Interacts with MPP10. Component of the ribosomal small subunit (SSU) processome composed of at least 40 protein subunits and snoRNA U3.

The protein resides in the nucleus. It localises to the nucleolus. In terms of biological role, required for bud-site selection and cell separation. Also involved in nucleolar processing of pre-18S ribosomal RNA. The protein is Periodic tryptophan protein 2 (PWP2) of Saccharomyces cerevisiae (strain ATCC 204508 / S288c) (Baker's yeast).